The following is a 272-amino-acid chain: Small ribosomal subunit protein uS2 (272 aa).

The disordered stretch occupies residues 251-272; that stretch reads LLTEGAPAAEAPAEAEGETKAE. A compositionally biased stretch (low complexity) spans 253–264; that stretch reads TEGAPAAEAPAE.

Belongs to the universal ribosomal protein uS2 family.

The polypeptide is Small ribosomal subunit protein uS2 (Bifidobacterium adolescentis (strain ATCC 15703 / DSM 20083 / NCTC 11814 / E194a)).